A 196-amino-acid polypeptide reads, in one-letter code: Transmembrane protein 126A (196 aa).

Topologically, residues 1-34 (MESHKPSTNKDDLIFNIIPRKIKQLPESDRNLLE) are mitochondrial matrix. Residues 35-55 (YGSAYIGLNAAFGGLIANSLF) traverse the membrane as a helical segment. The Mitochondrial intermembrane segment spans residues 56–57 (RR). A helical membrane pass occupies residues 58–78 (ILNVTQARVASSLPMAVIPFL). Residues 79 to 106 (TANLSYHSFVSLPLSTGNLNCEICTTTR) lie on the Mitochondrial matrix side of the membrane. Residues 107–127 (GTLVGFVLGGLYPILLAIPVN) traverse the membrane as a helical segment. At 128 to 159 (GGLAARYESSPLPQRGNIFNYWITISKPVFRK) the chain is on the mitochondrial intermembrane side. Residues 160–176 (MLFPTLLQTAFAAYLGS) form a helical membrane-spanning segment. The Mitochondrial matrix segment spans residues 177–196 (RQYKLLIKALQLPEPDLEIQ).

It belongs to the TMEM126 family. In terms of assembly, interacts with OXA1L; promoting cotranslational quality control in mitochondria.

The protein localises to the mitochondrion inner membrane. Protein required for the cotranslational protein quality control in the inner membrane of the mitochondria. Associates with newly synthesized polypeptides and may act as a chaperone that cooperates with OXA1L for the insertion of newly synthesized mitochondrial proteins into the inner membrane. Required for the assembly of the ND4 module of mitochondrial complex I. The chain is Transmembrane protein 126A (Tmem126a) from Rattus norvegicus (Rat).